The following is a 255-amino-acid chain: MSISDNSRDQLGELPAGRPLQSDFDNDLDYPRLGSVTFRRGTLTENQQTMWDEKWPELGRVLEDELIDVDAWFGREGAKTIVEIGSGTGTSTAAMAPLEADTNIVAVELYKPGLAKLMGSVVRGEIDNVRMVRGDGIEVLNRMFADGSLDGIRVYFPDPWPKARHNKRRIIQSGPLNLFAKKLKPGGVLHVATDHADYAEWINELVEVEPLLEYKGWPWEECPQLTDRQVITKFEGKGLEKDHVINEYLWQKVQN.

Basic and acidic residues predominate over residues 1–11; sequence MSISDNSRDQL. Residues 1-25 form a disordered region; sequence MSISDNSRDQLGELPAGRPLQSDFD. 4 residues coordinate S-adenosyl-L-methionine: Glu83, Glu108, Asp135, and Asp158. Asp158 is a catalytic residue. Lys162 serves as a coordination point for substrate. Residues 164 to 169 are interaction with RNA; that stretch reads RHNKRR. Residues Asp194 and 232–235 each bind substrate; that span reads TKFE.

Belongs to the class I-like SAM-binding methyltransferase superfamily. TrmB family.

It catalyses the reaction guanosine(46) in tRNA + S-adenosyl-L-methionine = N(7)-methylguanosine(46) in tRNA + S-adenosyl-L-homocysteine. It participates in tRNA modification; N(7)-methylguanine-tRNA biosynthesis. Functionally, catalyzes the formation of N(7)-methylguanine at position 46 (m7G46) in tRNA. This is tRNA (guanine-N(7)-)-methyltransferase from Corynebacterium glutamicum (strain ATCC 13032 / DSM 20300 / JCM 1318 / BCRC 11384 / CCUG 27702 / LMG 3730 / NBRC 12168 / NCIMB 10025 / NRRL B-2784 / 534).